The sequence spans 232 residues: 5'-methylthioadenosine/S-adenosylhomocysteine nucleosidase (232 aa).

Glutamate 12 acts as the Proton acceptor in catalysis. Residues glycine 78, isoleucine 152, and 173–174 contribute to the substrate site; that span reads ME. Catalysis depends on aspartate 197, which acts as the Proton donor.

It belongs to the PNP/UDP phosphorylase family. MtnN subfamily. Homodimer.

The catalysed reaction is S-adenosyl-L-homocysteine + H2O = S-(5-deoxy-D-ribos-5-yl)-L-homocysteine + adenine. The enzyme catalyses S-methyl-5'-thioadenosine + H2O = 5-(methylsulfanyl)-D-ribose + adenine. It carries out the reaction 5'-deoxyadenosine + H2O = 5-deoxy-D-ribose + adenine. The protein operates within amino-acid biosynthesis; L-methionine biosynthesis via salvage pathway; S-methyl-5-thio-alpha-D-ribose 1-phosphate from S-methyl-5'-thioadenosine (hydrolase route): step 1/2. Catalyzes the irreversible cleavage of the glycosidic bond in both 5'-methylthioadenosine (MTA) and S-adenosylhomocysteine (SAH/AdoHcy) to adenine and the corresponding thioribose, 5'-methylthioribose and S-ribosylhomocysteine, respectively. Also cleaves 5'-deoxyadenosine, a toxic by-product of radical S-adenosylmethionine (SAM) enzymes, into 5-deoxyribose and adenine. Thus, is required for in vivo function of the radical SAM enzymes biotin synthase and lipoic acid synthase, that are inhibited by 5'-deoxyadenosine accumulation. The polypeptide is 5'-methylthioadenosine/S-adenosylhomocysteine nucleosidase (Klebsiella pneumoniae subsp. pneumoniae (strain ATCC 700721 / MGH 78578)).